Reading from the N-terminus, the 105-residue chain is Serine protease inhibitor Kazal-type 6 (105 aa).

Positions 1–23 (MKVAGVFLLLSLALLCFFSGAFS) are cleaved as a signal peptide. A Pyrrolidone carboxylic acid modification is found at Gln-24. Positions 49-105 (RLFQINCGEFRDPKVFCTRESDPLCGSDGQTYGNKCAFCKALEKSSGKINLKHRGKC) constitute a Kazal-like domain. 3 cysteine pairs are disulfide-bonded: Cys-55–Cys-87, Cys-65–Cys-84, and Cys-73–Cys-105.

As to expression, expressed in the upper epidermis and in skin appendages.

Its subcellular location is the secreted. Functionally, serine protease inhibitor selective for kallikreins. Efficiently inhibits KLK5 and human KLK2, KLK4, KLK5, KLK6, KLK7, KLK12, KLK13 and KLK14. Doesn't inhibit human KLK1 and KLK8. In Mus musculus (Mouse), this protein is Serine protease inhibitor Kazal-type 6 (Spink6).